The primary structure comprises 369 residues: Small RNA 2'-O-methyltransferase (369 aa).

Positions 39, 57, and 93 each coordinate S-adenosyl-L-methionine. Residues glutamate 111, glutamate 114, histidine 115, and histidine 161 each coordinate Mg(2+).

It belongs to the methyltransferase superfamily. HEN1 family. It depends on Mg(2+) as a cofactor.

It is found in the cytoplasm. The catalysed reaction is small RNA 3'-end nucleotide + S-adenosyl-L-methionine = small RNA 3'-end 2'-O-methylnucleotide + S-adenosyl-L-homocysteine + H(+). Its function is as follows. Methyltransferase that adds a 2'-O-methyl group at the 3'-end of piRNAs, a class of 24 to 30 nucleotide RNAs that are generated by a Dicer-independent mechanism and are primarily derived from transposons and other repeated sequence elements. This probably protects the 3'-end of piRNAs from uridylation activity and subsequent degradation. Stabilization of piRNAs is essential for gametogenesis. This chain is Small RNA 2'-O-methyltransferase (henmt1), found in Xenopus tropicalis (Western clawed frog).